The sequence spans 627 residues: Phosphomethylpyrimidine synthase (627 aa).

Polar residues predominate over residues 1 to 24 (MSATQKNNITRLEQLDRQSTQPFP). The segment at 1–29 (MSATQKNNITRLEQLDRQSTQPFPNSRKV) is disordered. Substrate is bound by residues N231, M260, Y289, H325, 345-347 (SRG), 386-389 (DGLR), and E425. Residue H429 coordinates Zn(2+). Y452 serves as a coordination point for substrate. Residue H493 participates in Zn(2+) binding. [4Fe-4S] cluster contacts are provided by C573, C576, and C581.

This sequence belongs to the ThiC family. In terms of assembly, homodimer. The cofactor is [4Fe-4S] cluster.

The catalysed reaction is 5-amino-1-(5-phospho-beta-D-ribosyl)imidazole + S-adenosyl-L-methionine = 4-amino-2-methyl-5-(phosphooxymethyl)pyrimidine + CO + 5'-deoxyadenosine + formate + L-methionine + 3 H(+). It participates in cofactor biosynthesis; thiamine diphosphate biosynthesis. Functionally, catalyzes the synthesis of the hydroxymethylpyrimidine phosphate (HMP-P) moiety of thiamine from aminoimidazole ribotide (AIR) in a radical S-adenosyl-L-methionine (SAM)-dependent reaction. The polypeptide is Phosphomethylpyrimidine synthase (Pseudomonas paraeruginosa (strain DSM 24068 / PA7) (Pseudomonas aeruginosa (strain PA7))).